Reading from the N-terminus, the 1008-residue chain is MEIEVVLGIGEDAGPKPCSAEIESAEKTLKDDGVVQENGVRVSDNGEKKSDVVVDVDEKNEKNLNESGVIEDCVMNGVSSLLKLKEDVEEEEEEEEEEEEEEEDGEDEEEEEEEEEEEEEEEHGYCVGDFVWGKIKNHPWWPGQIYDPSDASDLALKIKQKGKLLVACFGDGTFAWCGASQLKPFAESFKECSKVSNSRSFLGAVEEAVEEIGRHIERVLVCDCAEEKKHEFDSPLVNNAGIKEGVLVRDVRREMISSLLIGKHGEILKDVKSFAETVSFSGLLELEILKRKVSAFYRSNRGYGLTEYHEPQSVPGLEDKNNDDDDDDEEKNVNDGLQWRAKRSRVEEVAALDHEESSSLQRSLEKCSGFPDHRLPHRRKEKSITEIIEKESAAKVRFETEPADGDVKSNVKSGRKKTKRHDEVNGDLENVTTTALWRRRKSEVATIEDGGNKQVVESSKGKTSRKKKKMDVDDGDDDGSGDKEESEEKEISDLEINIDSTSLASLRKKVRFDDSVVERSTENGETATQTSKRERKKSKYLSPDFLSDFSRKGRKKSTIESESSKVSSQSQVDERVTDASDSLMEVEEDTLDKPCEPSSDNGLGQEELSRELSNAVDFLRLGATPKEMQDLIRVAALGTQYPKDSSSRDMVREFMTIYRSFTYHDGANHKFLGSYDSSDKEKEELSEMGKPVTKGKEKKDKKGKAKQKAEEIEVTGKEENETDKHGKMKKERKRKKSESKKEGGEGEETQKEANESTKKERKRKKSESKKQSDGEEETQKEPSESTKKERKRKNPESKKKAEAVEEEETRKESVESTKKERKRKKPKHDEEEVPNETEKPEKKKKKKREGKSKKKETETEFSGAELYVTFGPGSSLPKKEDLIEIYEKFGALDKERTDTVDNNFSAHVAFLDVADGEKAFESSLEKCPFTSNSTVKFRLKYPNERTEEKKTEAEVAETTMEVEYLKKKLDEMKLLLDGCEGGMTEEVKVKLEGEMVNLLEKVIEMRSS.

Residues 78 to 122 (VSSLLKLKEDVEEEEEEEEEEEEEEEDGEDEEEEEEEEEEEEEEE) adopt a coiled-coil conformation. The segment at 84 to 124 (LKEDVEEEEEEEEEEEEEEEDGEDEEEEEEEEEEEEEEEHG) is disordered. Residues 87–122 (DVEEEEEEEEEEEEEEEDGEDEEEEEEEEEEEEEEE) are compositionally biased toward acidic residues. Residues 127 to 188 (VGDFVWGKIK…ASQLKPFAES (62 aa)) form the PWWP domain. Disordered regions lie at residues 307 to 339 (EYHE…GLQW), 399 to 606 (ETEP…LGQE), and 668 to 874 (NHKF…GPGS). Residues 321 to 330 (NNDDDDDDEE) show a composition bias toward acidic residues. Basic and acidic residues predominate over residues 399 to 409 (ETEPADGDVKS). A compositionally biased stretch (acidic residues) spans 473–490 (DDGDDDGSGDKEESEEKE). 3 stretches are compositionally biased toward basic and acidic residues: residues 511–522 (RFDDSVVERSTE), 677–687 (SSDKEKEELSE), and 707–725 (QKAE…TDKH). Residues 726-738 (GKMKKERKRKKSE) are compositionally biased toward basic residues. Composition is skewed to basic and acidic residues over residues 739–758 (SKKE…ESTK), 768–787 (SKKQ…ESTK), and 794–818 (NPES…ESTK). Short sequence motifs (nuclear localization signal) lie at residues 786-793 (TKKERKRK), 809-816 (TRKESVES), and 841-848 (EKKKKKKR). Positions 804–824 (VEEEETRKESVESTKKERKRK) form a coiled coil. Positions 842-854 (KKKKKKREGKSKK) are enriched in basic residues.

This sequence belongs to the PDP family. Interacts with DEK3. Binds to LHP1, MSI4/FVE and MSI5. Component of the PRC2 (polycomb repressive complex 2) complex which regulates histone methylation on histone H3K27.

The protein resides in the nucleus. Its function is as follows. Together with PDP1, PDP2 and PDP6, interacts with MSI4/FVE and MSI5 to suppress FLC, MAF4 and MAF5 expression by regulating the function of the PRC2 complex and modulating H3K27me3 level, thereby promoting flowering. The sequence is that of PWWP domain-containing protein 3 from Arabidopsis thaliana (Mouse-ear cress).